Here is an 89-residue protein sequence, read N- to C-terminus: Large ribosomal subunit protein bL27 (89 aa).

The disordered stretch occupies residues 1-20; that stretch reads MAHKKAGGSSRNGRDSAGRR.

This sequence belongs to the bacterial ribosomal protein bL27 family.

The protein is Large ribosomal subunit protein bL27 of Jannaschia sp. (strain CCS1).